The chain runs to 499 residues: MADNKSTLPGLPDINGTLNRSMTPNTGWEGPYDMSVHLHWTQFPPVTEEWHYIIGVYITIVGLLGIMGNTTVVYIFSNTKSLRSPSNLFVVNLAVSDLIFSAVNGFPLLTVSSFHQKWIFGSLFCQLYGFVGGVFGLMSINTLTAISIDRYVVITKPLQASQTMTRRKVHLMIVIVWVLSILLSIPPFFGWGAYIPEGFQTSCTFDYLTKTARTRTYIVVLYLFGFLIPLIIIGVCYVLIIRGVRRHDQKMLTITRSMKTEDARANNKRARSELRISKIAMTVTCLFIISWSPYAIIALIAQFGPAHWITPLVSELPMMLAKSSSMHNPVVYALSHPKFRKALYQRVPWLFCCCKPKEKADFRTSVCSKRSVTRTESVNSDVSSVISNLSDSTTTLGLTSEGATRANRETSFRRSVSIIKGDEDPCTHPDTFLLAYKEVEVGNLFDMTDDQNRRDSNLHSLYIPTRVQHRPTTQSLGTTPGGVYIVDNGQRVNGLTFNS.

The Extracellular portion of the chain corresponds to 1–50 (MADNKSTLPGLPDINGTLNRSMTPNTGWEGPYDMSVHLHWTQFPPVTEEW). N-linked (GlcNAc...) asparagine glycans are attached at residues Asn-4, Asn-15, and Asn-19. A helical membrane pass occupies residues 51–75 (HYIIGVYITIVGLLGIMGNTTVVYI). Residues 76–87 (FSNTKSLRSPSN) lie on the Cytoplasmic side of the membrane. Residues 88–114 (LFVVNLAVSDLIFSAVNGFPLLTVSSF) form a helical membrane-spanning segment. Topologically, residues 115 to 128 (HQKWIFGSLFCQLY) are extracellular. The cysteines at positions 125 and 203 are disulfide-linked. A helical membrane pass occupies residues 129 to 148 (GFVGGVFGLMSINTLTAISI). The Cytoplasmic segment spans residues 149–168 (DRYVVITKPLQASQTMTRRK). Residues 169–192 (VHLMIVIVWVLSILLSIPPFFGWG) traverse the membrane as a helical segment. Residues 193–216 (AYIPEGFQTSCTFDYLTKTARTRT) lie on the Extracellular side of the membrane. Residues 217-244 (YIVVLYLFGFLIPLIIIGVCYVLIIRGV) form a helical membrane-spanning segment. The Cytoplasmic portion of the chain corresponds to 245-278 (RRHDQKMLTITRSMKTEDARANNKRARSELRISK). A helical membrane pass occupies residues 279–302 (IAMTVTCLFIISWSPYAIIALIAQ). The Extracellular segment spans residues 303–310 (FGPAHWIT). A helical transmembrane segment spans residues 311–335 (PLVSELPMMLAKSSSMHNPVVYALS). The residue at position 322 (Lys-322) is an N6-(retinylidene)lysine. The Cytoplasmic portion of the chain corresponds to 336–499 (HPKFRKALYQ…QRVNGLTFNS (164 aa)). 2 S-palmitoyl cysteine lipidation sites follow: Cys-353 and Cys-354.

The protein belongs to the G-protein coupled receptor 1 family. Opsin subfamily. Phosphorylated on some or all of the serine and threonine residues present in the C-terminal region. As to expression, retina. Expressed in the depolarizing cell layer of the photoreceptor cells distant from the lens.

The protein resides in the membrane. Its function is as follows. Visual pigments such as rhodopsin and porphyropsin are light-absorbing molecules that mediate vision. Rhodopsin consists of an apoprotein, opsin, covalently linked to 11-cis-retinal. This receptor is coupled to the activation of phospholipase C. Porphyropsin consists of opsin covalently linked to 11-cis 3,4-didehydroretinal. This is Rhodopsin, GQ-coupled (SCOP1) from Mizuhopecten yessoensis (Japanese scallop).